The sequence spans 415 residues: Beta-1,4-glucuronyltransferase 1 (415 aa).

The Cytoplasmic portion of the chain corresponds to 1 to 8 (MQMSYAIR). Residues 9-36 (CAFYQLLLAALMLVAMLQLLYLSLLSGL) form a helical; Signal-anchor for type II membrane protein membrane-spanning segment. The Lumenal segment spans residues 37–415 (HGQEEQDQYF…AKYPNSPRRC (379 aa)). N-linked (GlcNAc...) asparagine glycosylation occurs at Asn204. 2 residues coordinate Mn(2+): Asp227 and Asp229. The N-linked (GlcNAc...) asparagine glycan is linked to Asn300.

The protein belongs to the glycosyltransferase 49 family. As to quaternary structure, interacts with LARGE1 and LARGE2. The cofactor is Mn(2+).

It is found in the golgi apparatus membrane. The catalysed reaction is 3-O-[beta-D-Xyl-(1-&gt;4)-Rib-ol-P-Rib-ol-P-3-beta-D-GalNAc-(1-&gt;3)-beta-D-GlcNAc-(1-&gt;4)-(O-6-P-alpha-D-Man)]-Thr-[protein] + UDP-alpha-D-glucuronate = 3-O-[beta-D-GlcA-(1-&gt;3)-beta-D-Xyl-(1-&gt;4)-Rib-ol-P-Rib-ol-P-3-beta-D-GalNAc-(1-&gt;3)-beta-D-GlcNAc-(1-&gt;4)-(O-6-P-alpha-D-Man)]-Thr-[protein] + UDP + H(+). The protein operates within protein modification; protein glycosylation. Functionally, beta-1,4-glucuronyltransferase involved in O-mannosylation of alpha-dystroglycan (DAG1). Transfers a glucuronic acid (GlcA) residue onto a xylose (Xyl) acceptor to produce the glucuronyl-beta-1,4-xylose-beta disaccharide primer, which is further elongated by LARGE1, during synthesis of phosphorylated O-mannosyl glycan. Phosphorylated O-mannosyl glycan is a carbohydrate structure present in alpha-dystroglycan (DAG1), which is required for binding laminin G-like domain-containing extracellular proteins with high affinity. Required for axon guidance; via its function in O-mannosylation of alpha-dystroglycan (DAG1). The chain is Beta-1,4-glucuronyltransferase 1 from Pongo abelii (Sumatran orangutan).